A 26-amino-acid chain; its full sequence is uncharacterized protein (26 aa).

Residues 1–16 (MPEQKANCSPNGNITV) are compositionally biased toward polar residues. Residues 1–26 (MPEQKANCSPNGNITVDSMIMSLGSS) are disordered.

This is an uncharacterized protein from Saccharomyces cerevisiae (strain ATCC 204508 / S288c) (Baker's yeast).